The primary structure comprises 395 residues: 8-amino-7-oxononanoate synthase (395 aa).

Position 24 (R24) interacts with substrate. 111 to 112 lines the pyridoxal 5'-phosphate pocket; the sequence is GF. H136 is a binding site for substrate. Residues S184, 209-212, and 240-243 contribute to the pyridoxal 5'-phosphate site; these read DDAH and TLSK. At K243 the chain carries N6-(pyridoxal phosphate)lysine. T357 contacts substrate.

Belongs to the class-II pyridoxal-phosphate-dependent aminotransferase family. BioF subfamily. Homodimer. Pyridoxal 5'-phosphate serves as cofactor.

It carries out the reaction 6-carboxyhexanoyl-[ACP] + L-alanine + H(+) = (8S)-8-amino-7-oxononanoate + holo-[ACP] + CO2. It participates in cofactor biosynthesis; biotin biosynthesis. In terms of biological role, catalyzes the decarboxylative condensation of pimeloyl-[acyl-carrier protein] and L-alanine to produce 8-amino-7-oxononanoate (AON), [acyl-carrier protein], and carbon dioxide. The polypeptide is 8-amino-7-oxononanoate synthase (Alkaliphilus oremlandii (strain OhILAs) (Clostridium oremlandii (strain OhILAs))).